The chain runs to 411 residues: MSRRLFTSESVTEGHPDKIADQISDTILDALLREDPTSRVAVETLITTGLVHVAGEVTTKAYAPIAQLVREKILEIGYDSSKKGFDGASCGVSVSIGAQSPDIAQGVDTAYESRVEGDEDELDRQGAGDQGLMFGYACDETPELMPLPIHLAHRLSRRLSEVRKNGTIPYLRPDGKTQVTIEYDGDKAVRLDTVVVSSQHASDIDLESLLAPDIREFVVEPELKALVEDGIKLETEGYRLLVNPTGRFEIGGPMGDAGLTGRKIIIDTYGGMSRHGGGAFSGKDPSKVDRSAAYAMRWVAKNVVAAGLASRCEVQVAYAIGKAEPVGLFVETFGTNTIDTDKIEQAISEVFDLRPAAIIRDLDLLRPIYSQTAAYGHFGRSLPEFTWEKTDRVDGCGRPPVWRADLLPLVH.

His15 lines the ATP pocket. Asp17 contributes to the Mg(2+) binding site. A K(+)-binding site is contributed by Glu43. L-methionine-binding residues include Glu56 and Gln99. The tract at residues 99–109 (QSPDIAQGVDT) is flexible loop. Residues 174–176 (DGK), 247–248 (RF), Asp256, 262–263 (RK), Ala279, and Lys283 contribute to the ATP site. An L-methionine-binding site is contributed by Asp256. L-methionine is bound at residue Lys287.

The protein belongs to the AdoMet synthase family. In terms of assembly, homotetramer; dimer of dimers. Mg(2+) serves as cofactor. The cofactor is K(+).

It localises to the cytoplasm. It catalyses the reaction L-methionine + ATP + H2O = S-adenosyl-L-methionine + phosphate + diphosphate. Its pathway is amino-acid biosynthesis; S-adenosyl-L-methionine biosynthesis; S-adenosyl-L-methionine from L-methionine: step 1/1. Functionally, catalyzes the formation of S-adenosylmethionine (AdoMet) from methionine and ATP. The overall synthetic reaction is composed of two sequential steps, AdoMet formation and the subsequent tripolyphosphate hydrolysis which occurs prior to release of AdoMet from the enzyme. The chain is S-adenosylmethionine synthase from Streptomyces spectabilis.